The sequence spans 290 residues: 4-diphosphocytidyl-2-C-methyl-D-erythritol kinase (290 aa).

K14 is a catalytic residue. 103–113 is an ATP binding site; sequence PMGGGLGGGSS. Residue D145 is part of the active site.

Belongs to the GHMP kinase family. IspE subfamily. In terms of assembly, homodimer.

It catalyses the reaction 4-CDP-2-C-methyl-D-erythritol + ATP = 4-CDP-2-C-methyl-D-erythritol 2-phosphate + ADP + H(+). The protein operates within isoprenoid biosynthesis; isopentenyl diphosphate biosynthesis via DXP pathway; isopentenyl diphosphate from 1-deoxy-D-xylulose 5-phosphate: step 3/6. In terms of biological role, catalyzes the phosphorylation of the position 2 hydroxy group of 4-diphosphocytidyl-2C-methyl-D-erythritol. This Pectobacterium carotovorum subsp. carotovorum (strain PC1) protein is 4-diphosphocytidyl-2-C-methyl-D-erythritol kinase.